The sequence spans 541 residues: Atlastin (541 aa).

The Cytoplasmic portion of the chain corresponds to 1–424; sequence MGGSAVQVIN…NIFKAARTPA (424 aa). The region spanning 35 to 284 is the GB1/RHD3-type G domain; the sequence is DRFVCVVSVA…LVPMLLAPDN (250 aa). GDP is bound by residues Arg48, Lys49, Gly50, Lys51, and Ser52. GTP-binding residues include Arg48, Lys49, Gly50, Lys51, Ser52, and Phe53. Residue Ser52 coordinates Mg(2+). Asp121 is a Mg(2+) binding site. Arg192, Asp193, and Val251 together coordinate GDP. GTP is bound by residues Arg192, Asp193, and Val251. Residues 322 to 413 are 3HB (three-helix bundle) domain; it reads MLVATAEANH…FTNYQAHNES (92 aa). The interval 414–422 is linker; it reads KNIFKAART. A helical membrane pass occupies residues 425-445; the sequence is VYFACAVIMYILSGIFGLVGL. The Lumenal portion of the chain corresponds to 446–448; the sequence is YTF. A helical transmembrane segment spans residues 449 to 469; sequence ANFCNLVMGVALLTLALWAYI. At 470 to 541 the chain is on the cytoplasmic side; the sequence is RYSGELSDFG…NASNGKVKRS (72 aa). Phosphothreonine is present on Thr514.

The protein belongs to the TRAFAC class dynamin-like GTPase superfamily. GB1/RHD3 GTPase family. GB1 subfamily. Monomeric and homodimeric. The homodimer, transiently formed by two molecules on opposing membranes, is the active form mediating ER membrane fusion. Interacts with spas; interaction may regulate microtubule dynamics. Ubiquitously expressed.

The protein resides in the endoplasmic reticulum membrane. The protein localises to the golgi apparatus membrane. The catalysed reaction is GTP + H2O = GDP + phosphate + H(+). Functionally, membrane-anchored GTPase that mediates the GTP-dependent fusion of endoplasmic reticulum (ER) membranes, maintaining the continuous ER network. It facilitates the formation of three-way junctions where ER tubules intersect. Two atlastin-1 on neighboring ER tubules bind GTP and form loose homodimers through the GB1/RHD3-type G domains and 3HB regions. Upon GTP hydrolysis, the 3HB regions tighten, pulling the membranes together to drive their fusion. After fusion, the homodimer disassembles upon release of inorganic phosphate (Pi). Subsequently, GDP dissociates, resetting the monomers to a conformation ready for a new fusion cycle. May also regulate more or less directly Golgi biogenesis. May also regulate microtubule polymerization and Golgi biogenesis. Required for dopaminergic neurons survival and the growth of muscles and synapses at neuromuscular junctions. The polypeptide is Atlastin (atl) (Drosophila melanogaster (Fruit fly)).